A 562-amino-acid polypeptide reads, in one-letter code: MDDNKRPLYLPFAGPAILEAPLINKGSAFTEEERIFFNLEGLLPHVIETIEEQASRAYDQYKNFGNDLDRHIYLRNIQDTNETLYYRLLQNHITEMMPIIYTPTVGLACERFSKNYRRNRGLFISYPNKDRIDDILNNSTRQKVKIIVVTDGERILGLGDQGIGGMGIPIGKLSLYTSCGGISPAYTLPITLDVGTDNPHLLEDPMYMGWRNQRIGGEEYAEFVEAFMEAVHRRWPDALIQFEDFAQKNAMPLLERYKDRYCCFNDDIQGTAAVTVGSLLAACQAADSKLSQQRIAFLGAGSAGCGIAEAIIAQMVSEGISDEQARQQVFMVDRWGLLQDNMPNLLPFQQNLAQQVAKVEGWNTESENISLLDVMHNGKPTVLIGVSGAPGLFSEEIIKAMHTHCERPIIFPLSNPTSRVEATPKDILHWTKGQALVATGSPFEPVVIEEQTYEIAQCNNSYIFPGIGLGVLASGAKRVSNEMLMASSRALAECSPLAKDGEGSLLPALEDIHSVSKHIAFAVGKVAIEQGHALPASDELLMQAIEDNFWTAEYRRYKRTSF.

Tyr-101 (proton donor) is an active-site residue. Arg-154 lines the NAD(+) pocket. Lys-172 (proton acceptor) is an active-site residue. Residues Glu-243, Asp-244, and Asp-267 each coordinate a divalent metal cation. NAD(+)-binding residues include Asp-267 and Asn-415.

This sequence belongs to the malic enzymes family. Homotetramer. Requires Mg(2+) as cofactor. Mn(2+) serves as cofactor.

The catalysed reaction is (S)-malate + NAD(+) = pyruvate + CO2 + NADH. It catalyses the reaction oxaloacetate + H(+) = pyruvate + CO2. The protein is NAD-dependent malic enzyme of Shewanella loihica (strain ATCC BAA-1088 / PV-4).